The chain runs to 211 residues: Protein-L-isoaspartate O-methyltransferase (211 aa).

Residue Ser-60 is part of the active site.

Belongs to the methyltransferase superfamily. L-isoaspartyl/D-aspartyl protein methyltransferase family.

It localises to the cytoplasm. It carries out the reaction [protein]-L-isoaspartate + S-adenosyl-L-methionine = [protein]-L-isoaspartate alpha-methyl ester + S-adenosyl-L-homocysteine. Its function is as follows. Catalyzes the methyl esterification of L-isoaspartyl residues in peptides and proteins that result from spontaneous decomposition of normal L-aspartyl and L-asparaginyl residues. It plays a role in the repair and/or degradation of damaged proteins. The protein is Protein-L-isoaspartate O-methyltransferase of Pseudomonas syringae pv. syringae (strain B728a).